The primary structure comprises 268 residues: Orotidine 5'-phosphate decarboxylase (268 aa).

Substrate-binding positions include Asp38, 60–62 (KTH), 92–101 (DRKFADIGNT), Tyr218, and Arg236. Catalysis depends on Lys94, which acts as the Proton donor.

The protein belongs to the OMP decarboxylase family.

It catalyses the reaction orotidine 5'-phosphate + H(+) = UMP + CO2. It functions in the pathway pyrimidine metabolism; UMP biosynthesis via de novo pathway; UMP from orotate: step 2/2. In Candida tropicalis (Yeast), this protein is Orotidine 5'-phosphate decarboxylase (URA3).